We begin with the raw amino-acid sequence, 165 residues long: Putative protein FAM86C2P (165 aa).

This sequence belongs to the class I-like SAM-binding methyltransferase superfamily. EEF2KMT family.

The sequence is that of Putative protein FAM86C2P (FAM86C2P) from Homo sapiens (Human).